The primary structure comprises 193 residues: Acyl carrier protein phosphodiesterase (193 aa).

This sequence belongs to the AcpH family.

The catalysed reaction is holo-[ACP] + H2O = apo-[ACP] + (R)-4'-phosphopantetheine + H(+). In terms of biological role, converts holo-ACP to apo-ACP by hydrolytic cleavage of the phosphopantetheine prosthetic group from ACP. The sequence is that of Acyl carrier protein phosphodiesterase from Klebsiella pneumoniae subsp. pneumoniae (strain ATCC 700721 / MGH 78578).